We begin with the raw amino-acid sequence, 340 residues long: UDP-3-O-(3-hydroxymyristoyl)glucosamine N-acyltransferase (340 aa).

Histidine 239 acts as the Proton acceptor in catalysis.

It belongs to the transferase hexapeptide repeat family. LpxD subfamily. Homotrimer.

The enzyme catalyses a UDP-3-O-[(3R)-3-hydroxyacyl]-alpha-D-glucosamine + a (3R)-hydroxyacyl-[ACP] = a UDP-2-N,3-O-bis[(3R)-3-hydroxyacyl]-alpha-D-glucosamine + holo-[ACP] + H(+). It carries out the reaction UDP-3-O-[(3R)-3-hydroxytetradecanoyl]-alpha-D-glucosamine + (3R)-hydroxytetradecanoyl-[ACP] = UDP-2-N,3-O-bis[(3R)-3-hydroxytetradecanoyl]-alpha-D-glucosamine + holo-[ACP] + H(+). It participates in glycolipid biosynthesis; lipid IV(A) biosynthesis; lipid IV(A) from (3R)-3-hydroxytetradecanoyl-[acyl-carrier-protein] and UDP-N-acetyl-alpha-D-glucosamine: step 3/6. Its function is as follows. Catalyzes the N-acylation of UDP-3-O-(hydroxytetradecanoyl)glucosamine using 3-hydroxytetradecanoyl-ACP as the acyl donor. Is involved in the biosynthesis of lipid A, a phosphorylated glycolipid that anchors the lipopolysaccharide to the outer membrane of the cell. In Yersinia enterocolitica, this protein is UDP-3-O-(3-hydroxymyristoyl)glucosamine N-acyltransferase.